The chain runs to 93 residues: Molybdopterin synthase sulfur carrier subunit (93 aa).

The residue at position 93 (glycine 93) is a 1-thioglycine; alternate. Glycine 93 carries the post-translational modification Glycyl adenylate; alternate.

This sequence belongs to the MoaD family. MOCS2A subfamily. In terms of assembly, heterotetramer; composed of 2 small (MOCS2A) and 2 large (MOCS2B) subunits. Post-translationally, C-terminal thiocarboxylation occurs in 2 steps, it is first acyl-adenylated (-COAMP) via the hesA/moeB/thiF part of uba4, then thiocarboxylated (-COSH) via the rhodanese domain of uba4.

It is found in the cytoplasm. The protein operates within cofactor biosynthesis; molybdopterin biosynthesis. Its function is as follows. Acts as a sulfur carrier required for molybdopterin biosynthesis. Component of the molybdopterin synthase complex that catalyzes the conversion of precursor Z into molybdopterin by mediating the incorporation of 2 sulfur atoms into precursor Z to generate a dithiolene group. In the complex, serves as sulfur donor by being thiocarboxylated (-COSH) at its C-terminus by uba4. After interaction with MOCS2B, the sulfur is then transferred to precursor Z to form molybdopterin. This is Molybdopterin synthase sulfur carrier subunit from Pyrenophora tritici-repentis (strain Pt-1C-BFP) (Wheat tan spot fungus).